The primary structure comprises 179 residues: Large ribosomal subunit protein uL6 (179 aa).

Belongs to the universal ribosomal protein uL6 family. As to quaternary structure, part of the 50S ribosomal subunit.

This protein binds to the 23S rRNA, and is important in its secondary structure. It is located near the subunit interface in the base of the L7/L12 stalk, and near the tRNA binding site of the peptidyltransferase center. The polypeptide is Large ribosomal subunit protein uL6 (Pseudomonas savastanoi pv. phaseolicola (strain 1448A / Race 6) (Pseudomonas syringae pv. phaseolicola (strain 1448A / Race 6))).